The primary structure comprises 388 residues: Succinate--CoA ligase [ADP-forming] subunit beta (388 aa).

Residues K9–K245 form the ATP-grasp domain. Residues K46, G53–G55, E100, Y103, and E108 each bind ATP. N200 and D214 together coordinate Mg(2+). Residues N265 and G322–V324 contribute to the substrate site.

Belongs to the succinate/malate CoA ligase beta subunit family. Heterotetramer of two alpha and two beta subunits. It depends on Mg(2+) as a cofactor.

It carries out the reaction succinate + ATP + CoA = succinyl-CoA + ADP + phosphate. The enzyme catalyses GTP + succinate + CoA = succinyl-CoA + GDP + phosphate. It functions in the pathway carbohydrate metabolism; tricarboxylic acid cycle; succinate from succinyl-CoA (ligase route): step 1/1. Its function is as follows. Succinyl-CoA synthetase functions in the citric acid cycle (TCA), coupling the hydrolysis of succinyl-CoA to the synthesis of either ATP or GTP and thus represents the only step of substrate-level phosphorylation in the TCA. The beta subunit provides nucleotide specificity of the enzyme and binds the substrate succinate, while the binding sites for coenzyme A and phosphate are found in the alpha subunit. This Psychrobacter arcticus (strain DSM 17307 / VKM B-2377 / 273-4) protein is Succinate--CoA ligase [ADP-forming] subunit beta.